The following is a 398-amino-acid chain: MTQLFDTLGFIDTSAARTGAAAATHDAAATSTEPAGPAGAAAVSLEQVGKVFATPRGQAAALRDVTLDVRRGEVFGIIGRSGAGKSTLLRLVNGLERPSSGRVRVQGVDVGALDEDGLVALRRRTGMVFQHFNLLSAKTVFENVALPLKIAGVPKAERVRKVEALLELVGLAAKRDAYPASLSGGQKQRVGIARALVHDPEVLLCDEATSALDPETTQSILALLADINRRLGLTIVLITHEMEVIRAVCDTVAVIEQGEVVETGPVWRVFGDPRHGATRALLSTLVHDLPAELAARVQPLPEQAALPDGAQVVLDVRYTGESGGEPDVGALAAALGGSVRFLHGGIERIQGHAQGRLVIAAALRAEDAGQSTARGGAVAALLERARRHANHAEVLGYV.

Residues 43 to 282 (VSLEQVGKVF…PRHGATRALL (240 aa)) enclose the ABC transporter domain. Residue 79–86 (GRSGAGKS) coordinates ATP.

This sequence belongs to the ABC transporter superfamily. Methionine importer (TC 3.A.1.24) family. The complex is composed of two ATP-binding proteins (MetN), two transmembrane proteins (MetI) and a solute-binding protein (MetQ).

The protein resides in the cell inner membrane. The catalysed reaction is L-methionine(out) + ATP + H2O = L-methionine(in) + ADP + phosphate + H(+). The enzyme catalyses D-methionine(out) + ATP + H2O = D-methionine(in) + ADP + phosphate + H(+). Its function is as follows. Part of the ABC transporter complex MetNIQ involved in methionine import. Responsible for energy coupling to the transport system. The polypeptide is Methionine import ATP-binding protein MetN 2 (Burkholderia lata (strain ATCC 17760 / DSM 23089 / LMG 22485 / NCIMB 9086 / R18194 / 383)).